We begin with the raw amino-acid sequence, 198 residues long: Nucleoid occlusion factor SlmA (198 aa).

In terms of domain architecture, HTH tetR-type spans 9–70; the sequence is RNRREEILQA…SLIEFIEDSL (62 aa). The H-T-H motif DNA-binding region spans 33-52; the sequence is TTAKLAANVGVSEAALYRHF. Residues 119-144 are a coiled coil; that stretch reads DRLQGRINQLFERIEVQLRQVLREKK.

The protein belongs to the nucleoid occlusion factor SlmA family. As to quaternary structure, homodimer. Interacts with FtsZ.

The protein resides in the cytoplasm. It localises to the nucleoid. Functionally, required for nucleoid occlusion (NO) phenomenon, which prevents Z-ring formation and cell division over the nucleoid. Acts as a DNA-associated cell division inhibitor that binds simultaneously chromosomal DNA and FtsZ, and disrupts the assembly of FtsZ polymers. SlmA-DNA-binding sequences (SBS) are dispersed on non-Ter regions of the chromosome, preventing FtsZ polymerization at these regions. The sequence is that of Nucleoid occlusion factor SlmA from Yersinia enterocolitica serotype O:8 / biotype 1B (strain NCTC 13174 / 8081).